Consider the following 350-residue polypeptide: Twinfilin-1 (350 aa).

Residue serine 2 is modified to N-acetylserine. Residues 2 to 139 form the ADF-H 1 domain; that stretch reads SHQTGIQASE…SLHGYRKYLL (138 aa). Phosphoserine occurs at positions 143 and 277. Positions 175 to 313 constitute an ADF-H 2 domain; that stretch reads LQGVAFPISR…TADFLYDEVH (139 aa). Position 309 is a phosphotyrosine (tyrosine 309). The tract at residues 316–350 is disordered; the sequence is QHAHKQSFAKPKGPAGKRGIRRLIRGPAEAEATTD. Residue threonine 349 is modified to Phosphothreonine.

Belongs to the actin-binding proteins ADF family. Twinfilin subfamily. In terms of assembly, interacts with G-actin; ADP-actin form and capping protein (CP). May also be able to interact with TWF2 and phosphoinositides, PI(4,5)P2. When bound to PI(4,5)P2, it is down-regulated. Interacts with ACTG1. In terms of processing, phosphorylated on serine and threonine residues.

It is found in the cytoplasm. Its subcellular location is the cytoskeleton. Functionally, actin-binding protein involved in motile and morphological processes. Inhibits actin polymerization, likely by sequestering G-actin. By capping the barbed ends of filaments, it also regulates motility. Seems to play an important role in clathrin-mediated endocytosis and distribution of endocytic organelles. In Rattus norvegicus (Rat), this protein is Twinfilin-1 (Twf1).